We begin with the raw amino-acid sequence, 596 residues long: Transketolase-like protein 1 (596 aa).

Residue His46 participates in substrate binding. Residues Ser49 and 94–96 (GWL) contribute to the thiamine diphosphate site. Asp126 is a binding site for Mg(2+). Residues Gly127 and Asn156 each coordinate thiamine diphosphate. Positions 156 and 158 each coordinate Mg(2+). Thiamine diphosphate contacts are provided by Lys218 and His232. His232, Arg292, and Ser319 together coordinate substrate. Thiamine diphosphate-binding residues include Glu340 and Phe366. The active-site Proton donor is Glu340. The substrate site is built by His390 and Asp398. Thiamine diphosphate is bound at residue Gln402. Residue Arg448 participates in substrate binding.

The protein belongs to the transketolase family. In terms of assembly, homodimer. Mg(2+) serves as cofactor. The cofactor is Ca(2+). Mn(2+) is required as a cofactor. Requires Co(2+) as cofactor. It depends on thiamine diphosphate as a cofactor.

The protein localises to the cytoplasm. The enzyme catalyses D-sedoheptulose 7-phosphate + D-glyceraldehyde 3-phosphate = aldehydo-D-ribose 5-phosphate + D-xylulose 5-phosphate. In terms of biological role, catalyzes the transfer of a two-carbon ketol group from a ketose donor to an aldose acceptor, via a covalent intermediate with the cofactor thiamine pyrophosphate. This chain is Transketolase-like protein 1 (TKTL1), found in Macaca fascicularis (Crab-eating macaque).